Here is a 586-residue protein sequence, read N- to C-terminus: Transcription elongation regulator 1-like protein (586 aa).

Residues 1-30 (MQAGARFQRRRRQLQQQQPRRRQPLLWPMD) are disordered. The segment covering 7–23 (FQRRRRQLQQQQPRRRQ) has biased composition (basic residues). Residues 148-181 (TPIGKSWIDKRIPNCKIFFNNSFALDSTWIHPEE) form the WW 1 domain. Disordered regions lie at residues 281 to 344 (TSPV…PGSP) and 378 to 448 (DLNR…QILL). The segment covering 306–317 (KSRDGDKEDKEP) has biased composition (basic and acidic residues). Residues 339–372 (PVPGSPWCVVWTGDDRVFFFNPTMHLSVWEKPMD) enclose the WW 2 domain. 3 stretches are compositionally biased toward basic and acidic residues: residues 378–387 (DLNRIIEDPP), 411–421 (DQDVKTKRNRT), and 428–439 (KPEEAKREDKGT). FF domains are found at residues 450–503 (LEER…FVKT) and 515–570 (KLLL…FILI).

The polypeptide is Transcription elongation regulator 1-like protein (TCERG1L) (Homo sapiens (Human)).